Here is a 149-residue protein sequence, read N- to C-terminus: Proline-rich acidic protein 1 (149 aa).

Residues 1-20 (MKRFLLATCLVAALLWEAGA) form the signal peptide. 2 disordered regions span residues 51–79 (EPLEKDNQLGPLLPEPKQKPAAAEEKRPD) and 97–122 (LQGPELDLDSIDHPMSDDVQDEEVPQ). Residues 66 to 79 (PKQKPAAAEEKRPD) show a composition bias toward basic and acidic residues.

In terms of assembly, interacts with MTTP. Interacts with MAD1L1. In terms of tissue distribution, predominantly expressed in the intestinal epithelial cells than in the liver (at protein level). Abundantly expressed in the uterus during late pregnancy by uterus epithelial cells. After birth expression rapidly decreases and is no longer found in the uterus by the third day. Also highly expressed in the small intestine where it shows a proximal-distal graded expression.

It localises to the secreted. It is found in the endoplasmic reticulum. Functionally, lipid-binding protein which promotes lipid absorption by facilitating MTTP-mediated lipid transfer (mainly triglycerides and phospholipids) and MTTP-mediated apoB lipoprotein assembly and secretion. Protects the gastrointestinal epithelium from irradiation-induced apoptosis. May play an important role in maintaining normal growth homeostasis in epithelial cells. Involved in p53/TP53-dependent cell survival after DNA damage. This is Proline-rich acidic protein 1 (Prap1) from Mus musculus (Mouse).